The primary structure comprises 161 residues: MNPRRKKRLTLAVALIAGVAAVASLLLYALNSNLNLFYTPYEITHGKNDTGVMPEVGQRIRVGGMVTIGSMKRDPDSLHVEFAVHDSAGGTVFVTYDDLLPDLFREGQGIVAQGVLVESGKLEATEVLAKHDENYMPPEVAEAMGQTHEKPTYNQKALEDK.

Topologically, residues 1 to 8 (MNPRRKKR) are cytoplasmic. Residues 9 to 29 (LTLAVALIAGVAAVASLLLYA) form a helical; Signal-anchor for type II membrane protein membrane-spanning segment. Residues 30 to 161 (LNSNLNLFYT…TYNQKALEDK (132 aa)) lie on the Periplasmic side of the membrane. Positions 131 and 135 each coordinate heme. A disordered region spans residues 142–161 (EAMGQTHEKPTYNQKALEDK). Residues 147–161 (THEKPTYNQKALEDK) show a composition bias toward basic and acidic residues.

It belongs to the CcmE/CycJ family.

It is found in the cell inner membrane. Heme chaperone required for the biogenesis of c-type cytochromes. Transiently binds heme delivered by CcmC and transfers the heme to apo-cytochromes in a process facilitated by CcmF and CcmH. The chain is Cytochrome c-type biogenesis protein CcmE from Shewanella frigidimarina (strain NCIMB 400).